We begin with the raw amino-acid sequence, 290 residues long: uncharacterized protein (290 aa).

NAD(+)-binding positions include 7–21 and Thr-100; that span reads AVFG…MAQN. Lys-175 is an active-site residue. Lys-243 serves as a coordination point for NAD(+).

It belongs to the HIBADH-related family.

This is an uncharacterized protein from Synechocystis sp. (strain ATCC 27184 / PCC 6803 / Kazusa).